The chain runs to 508 residues: Beta-glucosidase 10 (508 aa).

The signal sequence occupies residues 1-22 (MKLYSLLSVFLVILLATSDSDA). Residues Gln42, His142, and 187 to 188 (NE) each bind a beta-D-glucoside. The active-site Proton donor is the Glu188. Cysteines 207 and 215 form a disulfide. Asn214 and Asn219 each carry an N-linked (GlcNAc...) asparagine glycan. Position 331 (Tyr331) interacts with a beta-D-glucoside. Asn365 is a glycosylation site (N-linked (GlcNAc...) asparagine). Residue Glu398 participates in a beta-D-glucoside binding. The active-site Nucleophile is the Glu398. Residue Asn431 is glycosylated (N-linked (GlcNAc...) asparagine). Residues Trp441 and Phe457 each coordinate a beta-D-glucoside. Residues Asn463, Asn485, and Asn501 are each glycosylated (N-linked (GlcNAc...) asparagine).

It belongs to the glycosyl hydrolase 1 family.

The enzyme catalyses Hydrolysis of terminal, non-reducing beta-D-glucosyl residues with release of beta-D-glucose.. The polypeptide is Beta-glucosidase 10 (Arabidopsis thaliana (Mouse-ear cress)).